Reading from the N-terminus, the 556-residue chain is Portal protein (556 aa).

The segment at 527-556 (AQGAKTLSETQTSDPSALTAIANAAGAPQQ) is disordered. Residues 533–542 (LSETQTSDPS) are compositionally biased toward polar residues.

It belongs to the podoviridae head-to-tail connector protein family. Homododecamer.

It localises to the virion. Forms the portal vertex of the capsid. This portal plays critical roles in head assembly, genome packaging, neck/tail attachment, and genome ejection. The portal protein multimerizes as a single ring-shaped homododecamer arranged around a central channel. The chain is Portal protein from Salmonella phage epsilon15.